Here is a 502-residue protein sequence, read N- to C-terminus: NAD(P)H-quinone oxidoreductase chain 4, chloroplastic (502 aa).

A run of 14 helical transmembrane segments spans residues 4-24, 37-57, 86-106, 113-131, 136-156, 169-189, 210-230, 244-264, 274-294, 307-327, 332-352, 388-408, 418-438, and 464-484; these read FPWL…IFFV, YTIC…CYHF, GLSI…TLAA, SRLF…VGSF, LLLF…LLSM, FILY…GMGL, GLEI…SPII, HYST…YGLV, AHSI…IYAA, IAYS…SITD, GAIL…FLAG, LALP…GIIT, IVIS…SLSM, and LFVS…PDFV.

This sequence belongs to the complex I subunit 4 family.

It localises to the plastid. The protein localises to the chloroplast thylakoid membrane. It catalyses the reaction a plastoquinone + NADH + (n+1) H(+)(in) = a plastoquinol + NAD(+) + n H(+)(out). It carries out the reaction a plastoquinone + NADPH + (n+1) H(+)(in) = a plastoquinol + NADP(+) + n H(+)(out). The chain is NAD(P)H-quinone oxidoreductase chain 4, chloroplastic from Calycanthus floridus var. glaucus (Eastern sweetshrub).